Consider the following 504-residue polypeptide: Anaerobic nitric oxide reductase transcription regulator NorR (504 aa).

Asp57 is modified (4-aspartylphosphate). The Sigma-54 factor interaction domain maps to 187 to 416 (MIGLSPGMTQ…LEHAIHRAVV (230 aa)). Residues 215-222 (GETGTGKE) and 278-287 (ADNGTLFLDE) each bind ATP. A DNA-binding region (H-T-H motif) is located at residues 479-498 (WAACARMLETDVANLHRLAK).

The protein operates within nitrogen metabolism; nitric oxide reduction. Functionally, required for the expression of anaerobic nitric oxide (NO) reductase, acts as a transcriptional activator for at least the norVW operon. Activation also requires sigma-54. The chain is Anaerobic nitric oxide reductase transcription regulator NorR from Escherichia coli (strain 55989 / EAEC).